Here is a 307-residue protein sequence, read N- to C-terminus: Mitochondrial brown fat uncoupling protein 1 (307 aa).

Residues methionine 1–glutamine 10 are Mitochondrial intermembrane-facing. A helical transmembrane segment spans residues proline 11–phenylalanine 32. Solcar repeat units follow at residues proline 11–tyrosine 102, alanine 111–alanine 201, and aspartate 210–glutamate 295. Topologically, residues proline 33–lysine 73 are mitochondrial matrix. Lysine 56 provides a ligand contact to fatty acid 16:0. Residues leucine 74–tyrosine 96 traverse the membrane as a helical segment. Residues aspartate 97–lysine 116 lie on the Mitochondrial intermembrane side of the membrane. The helical transmembrane segment at isoleucine 117–proline 133 threads the bilayer. Over threonine 134–threonine 178 the chain is Mitochondrial matrix. Residues proline 179–tyrosine 195 form a helical membrane-spanning segment. Over aspartate 196–valine 212 the chain is Mitochondrial intermembrane. A helical membrane pass occupies residues proline 213–proline 232. The Mitochondrial matrix segment spans residues valine 233–alanine 266. At cysteine 254 the chain carries Cysteine sulfenic acid (-SOH). A helical membrane pass occupies residues phenylalanine 267 to phenylalanine 289. Lysine 269 is a binding site for fatty acid 16:0. Topologically, residues glutamate 290–threonine 307 are mitochondrial intermembrane.

Belongs to the mitochondrial carrier (TC 2.A.29) family. In terms of assembly, most probably functions as a monomer. Binds one purine nucleotide per monomer. However, has also been suggested to function as a homodimer or a homotetramer. Tightly associates with cardiolipin in the mitochondrion inner membrane; may stabilize and regulate its activity. May undergo ubiquitin-mediated proteasomal degradation. Post-translationally, may undergo sulfenylation upon cold exposure. May increase the sensitivity of UCP1 thermogenic function to the activation by noradrenaline probably through structural effects. Brown adipose tissue.

It is found in the mitochondrion inner membrane. It carries out the reaction H(+)(in) = H(+)(out). Has no constitutive proton transporter activity and has to be activated by long-chain fatty acids/LCFAs. Inhibited by purine nucleotides. Both purine nucleotides and LCFAs bind the cytosolic side of the transporter and directly compete to activate or inhibit it. Activated by noradrenaline and reactive oxygen species. Despite lacking canonical translational encoding for selenocysteine, a small pool of the protein has been observed to selectively incorporate selenocysteine at 'Cys-254'. Selenocysteine-modified protein is highly sensitive to redox modification and may constitute a pool of protein highly sensitive to activation by elevated levels of reactive oxygen species (ROS). Mitochondrial protein responsible for thermogenic respiration, a specialized capacity of brown adipose tissue and beige fat that participates in non-shivering adaptive thermogenesis to temperature and diet variations and more generally to the regulation of energy balance. Functions as a long-chain fatty acid/LCFA and proton symporter, simultaneously transporting one LCFA and one proton through the inner mitochondrial membrane. However, LCFAs remaining associated with the transporter via their hydrophobic tails, it results in an apparent transport of protons activated by LCFAs. Thereby, dissipates the mitochondrial proton gradient and converts the energy of substrate oxydation into heat instead of ATP. Regulates the production of reactive oxygen species/ROS by mitochondria. This Rattus norvegicus (Rat) protein is Mitochondrial brown fat uncoupling protein 1.